The primary structure comprises 154 residues: MNKIEGHVIGTDLKIGIVVSRFNDFITSKLLSGAEDTLLRHGVKADDIDVAWVPGAFEIPLIAKKMAETKKYDAVITLGTVIRGATSHYDYVCNEAAKGIAASSMSTGVPVIFGVLTTDTIEQAVERAGTKAGNKGAEAAAAAIEMANLTRSLQ.

Residues Phe22, Ala56–Glu58, and Thr80–Ile82 contribute to the 5-amino-6-(D-ribitylamino)uracil site. Residue Ala85 to Thr86 coordinates (2S)-2-hydroxy-3-oxobutyl phosphate. The active-site Proton donor is His88. Residue Phe113 participates in 5-amino-6-(D-ribitylamino)uracil binding. Arg127 lines the (2S)-2-hydroxy-3-oxobutyl phosphate pocket.

This sequence belongs to the DMRL synthase family. As to quaternary structure, forms an icosahedral capsid composed of 60 subunits, arranged as a dodecamer of pentamers.

It catalyses the reaction (2S)-2-hydroxy-3-oxobutyl phosphate + 5-amino-6-(D-ribitylamino)uracil = 6,7-dimethyl-8-(1-D-ribityl)lumazine + phosphate + 2 H2O + H(+). Its pathway is cofactor biosynthesis; riboflavin biosynthesis; riboflavin from 2-hydroxy-3-oxobutyl phosphate and 5-amino-6-(D-ribitylamino)uracil: step 1/2. Its function is as follows. Catalyzes the formation of 6,7-dimethyl-8-ribityllumazine by condensation of 5-amino-6-(D-ribitylamino)uracil with 3,4-dihydroxy-2-butanone 4-phosphate. This is the penultimate step in the biosynthesis of riboflavin. The chain is 6,7-dimethyl-8-ribityllumazine synthase from Bacillus licheniformis (strain ATCC 14580 / DSM 13 / JCM 2505 / CCUG 7422 / NBRC 12200 / NCIMB 9375 / NCTC 10341 / NRRL NRS-1264 / Gibson 46).